We begin with the raw amino-acid sequence, 298 residues long: Ethanolamine ammonia-lyase small subunit (298 aa).

The segment at methionine 17–cysteine 37 is disordered. Adenosylcob(III)alamin contacts are provided by valine 210, glutamate 231, and cysteine 261.

This sequence belongs to the EutC family. As to quaternary structure, the basic unit is a heterodimer which dimerizes to form tetramers. The heterotetramers trimerize; 6 large subunits form a core ring with 6 small subunits projecting outwards. The cofactor is adenosylcob(III)alamin.

The protein resides in the bacterial microcompartment. It catalyses the reaction ethanolamine = acetaldehyde + NH4(+). The protein operates within amine and polyamine degradation; ethanolamine degradation. Catalyzes the deamination of various vicinal amino-alcohols to oxo compounds. Allows this organism to utilize ethanolamine as the sole source of nitrogen and carbon in the presence of external vitamin B12. In Salmonella paratyphi A (strain ATCC 9150 / SARB42), this protein is Ethanolamine ammonia-lyase small subunit.